The chain runs to 213 residues: Dimethylamine corrinoid protein (213 aa).

In terms of domain architecture, B12-binding N-terminal spans 1 to 90 (MSKEELLQEL…LMPEGASGSK (90 aa)). The 123-residue stretch at 91–213 (LGVIVNGTVE…AVAKAKELLA (123 aa)) folds into the B12-binding domain. Methylcob(III)alamin is bound at residue H104.

Belongs to the methylamine corrinoid protein family. In terms of assembly, copurifies with MtbA.

The protein operates within one-carbon metabolism; methanogenesis from dimethylamine. Functionally, acts as a methyl group carrier between MtbB1 and MtbA. Binds 1 corrinoid cofactor per protein, is subsequently demethylated by MtbA. The sequence is that of Dimethylamine corrinoid protein from Methanosarcina barkeri.